The chain runs to 460 residues: Capsid vertex component 1 (460 aa).

The interval 167 to 197 (VQNSTGQDHRSPVNDNNEHTVTPGPLEPPSV) is disordered. Residues 173–184 (QDHRSPVNDNNE) show a composition bias toward basic and acidic residues.

It belongs to the herpesviridae CVC1 protein family. Interacts (via C-terminus) with capsid vertex component 2/CVC2.

Its subcellular location is the virion. The protein resides in the host nucleus. In terms of biological role, capsid vertex-specific component that plays a role during viral DNA encapsidation, assuring correct genome cleavage and presumably stabilizing capsids that contain full-length viral genomes. This is Capsid vertex component 1 from Elephantid herpesvirus 1 (isolate Asian elephant/Berlin/Kiba/1998) (EIHV-1).